The chain runs to 895 residues: WD repeat-containing protein 36 (895 aa).

WD repeat units follow at residues 30 to 63 (VVRF…LVAV), 72 to 101 (CCMA…IVHT), 110 to 143 (HFLQ…LQLT), 152 to 186 (SAIL…LLYT), 193 to 230 (GVTA…MKFR), 237 to 272 (TSIS…INQM), 277 to 320 (STAI…RFRM), and 327 to 361 (TNIR…FNKS). 2 positions are modified to phosphoserine: Ser-382 and Ser-399. WD repeat units follow at residues 389–428 (TKFA…GAYF), 441–475 (ATAV…HRGS), 486–522 (VRGV…HSVS), 527–562 (PNIM…VREF), 564–605 (GHQG…DCFL), and 607–645 (DSAP…SVVS).

As to quaternary structure, part of the small subunit (SSU) processome, composed of more than 70 proteins and the RNA chaperone small nucleolar RNA (snoRNA) U3. In terms of tissue distribution, expressed in heart, placenta, liver, skeletal muscle, kidney and pancreas. In ocular tissues, strong expression in iris, sclera, ciliary muscle, ciliary body, retina and optic nerve.

The protein localises to the nucleus. The protein resides in the nucleolus. In terms of biological role, part of the small subunit (SSU) processome, first precursor of the small eukaryotic ribosomal subunit. During the assembly of the SSU processome in the nucleolus, many ribosome biogenesis factors, an RNA chaperone and ribosomal proteins associate with the nascent pre-rRNA and work in concert to generate RNA folding, modifications, rearrangements and cleavage as well as targeted degradation of pre-ribosomal RNA by the RNA exosome. Involved in the nucleolar processing of SSU 18S rRNA. Involved in T-cell activation and highly coregulated with IL2. This is WD repeat-containing protein 36 from Homo sapiens (Human).